A 174-amino-acid polypeptide reads, in one-letter code: Pituitary tumor-transforming gene 1 protein-interacting protein (174 aa).

The signal sequence occupies residues 1–29 (MAPANLGLTPHWVMLLGAVLLLLLSGASA). At 30-93 (QEPPRVGCSE…RWGVCWVNFE (64 aa)) the chain is on the extracellular side. The PSI domain occupies 36–89 (GCSEYTNRSCEECLRNVSCLWCNENKACMDYPVRKILPPASLCKLSSARWGVCW). N-linked (GlcNAc...) asparagine glycosylation is found at N42 and N51. A helical membrane pass occupies residues 94 to 114 (ALIITMSVLGGSVLLGITVCC). Residues 115–174 (CYCCRRKKSRKPDKSDERAMREQEERRVRQEERRAEMKSRHDEIRKKYGLFKEQNPYEKF) lie on the Cytoplasmic side of the membrane. Residues 125 to 155 (KPDKSDERAMREQEERRVRQEERRAEMKSRH) are disordered. Over residues 126-155 (PDKSDERAMREQEERRVRQEERRAEMKSRH) the composition is skewed to basic and acidic residues. The stretch at 127–163 (DKSDERAMREQEERRVRQEERRAEMKSRHDEIRKKYG) forms a coiled coil. Y171 bears the Phosphotyrosine mark.

As to quaternary structure, interacts with PTTG1.

It localises to the cell membrane. Its subcellular location is the cytoplasm. The protein resides in the nucleus. Functionally, may facilitate PTTG1 nuclear translocation. This is Pituitary tumor-transforming gene 1 protein-interacting protein (Pttg1ip) from Mus musculus (Mouse).